Consider the following 285-residue polypeptide: 1-acyl-sn-glycerol-3-phosphate acyltransferase alpha (285 aa).

The signal sequence occupies residues 1 to 28 (MELWPGAWTALLLLLLLLLSTLWFCSSS). At 29-34 (AKYFFK) the chain is on the lumenal side. A helical membrane pass occupies residues 35-55 (MAFYNGWILFLAILAIPVCAV). Over 56 to 124 (RGRNVENMKI…PDRCVPIAKR (69 aa)) the chain is Cytoplasmic. The short motif at 101–106 (HQSSLD) is the HXXXXD motif element. A helical transmembrane segment spans residues 125-145 (ELLWAGSAGLACWLAGIIFID). Over 146 to 189 (RKRTGDAISVMSEVAQTLLTQDVRVWVFPEGTRNHNGSMLPFKR) the chain is Lumenal. The EGTR motif signature appears at 175–178 (EGTR).

This sequence belongs to the 1-acyl-sn-glycerol-3-phosphate acyltransferase family. As to expression, widely expressed.

The protein localises to the endoplasmic reticulum membrane. The enzyme catalyses a 1-acyl-sn-glycero-3-phosphate + an acyl-CoA = a 1,2-diacyl-sn-glycero-3-phosphate + CoA. It catalyses the reaction 1-(9Z-octadecenoyl)-sn-glycero-3-phosphate + (9Z)-octadecenoyl-CoA = 1,2-di-(9Z-octadecenoyl)-sn-glycero-3-phosphate + CoA. It carries out the reaction 1-(9Z-octadecenoyl)-sn-glycero-3-phosphate + hexadecanoyl-CoA = 1-(9Z)-octadecenoyl-2-hexadecanoyl-sn-glycero-3-phosphate + CoA. The catalysed reaction is heptadecanoyl-CoA + 1-(9Z-octadecenoyl)-sn-glycero-3-phosphate = 1-(9Z)-octadecenoyl-2-heptadecanoyl-sn-glycero-3-phosphate + CoA. The enzyme catalyses 1-(9Z-octadecenoyl)-sn-glycero-3-phosphate + octadecanoyl-CoA = 1-(9Z-octadecenoyl)-2-octadecanoyl-sn-glycero-3-phosphate + CoA. It catalyses the reaction 1-(9Z-octadecenoyl)-sn-glycero-3-phosphate + (9Z,12Z)-octadecadienoyl-CoA = 1-(9Z)-octadecenoyl-2-(9Z,12Z)-octadecadienoyl-sn-glycero-3-phosphate + CoA. It carries out the reaction 1-(9Z-octadecenoyl)-sn-glycero-3-phosphate + tetradecanoyl-CoA = 1-(9Z)-octadecenoyl-2-tetradecanoyl-sn-glycero-3-phosphate + CoA. The catalysed reaction is pentadecanoyl-CoA + 1-(9Z-octadecenoyl)-sn-glycero-3-phosphate = 1-(9Z)-octadecenoyl-2-pentadecanoyl-sn-glycero-3-phosphate + CoA. The enzyme catalyses 1-hexadecanoyl-sn-glycero-3-phosphate + (9Z)-octadecenoyl-CoA = 1-hexadecanoyl-2-(9Z-octadecenoyl)-sn-glycero-3-phosphate + CoA. It catalyses the reaction 1-(9Z,12Z,15Z)-octadecatrienoyl-sn-glycero-3-phosphate + (9Z)-octadecenoyl-CoA = 1-(9Z,12Z,15Z)-octadecatrienoyl-2-(9Z)-octadecenoyl-sn-glycero-3-phosphate + CoA. It carries out the reaction 1-(6Z,9Z,12Z-octadecatrienoyl)-sn-glycero-3-phosphate + (9Z)-octadecenoyl-CoA = (6Z,9Z,12Z)-octadecatrienoyl-2-(9Z)-octadecenoyl-sn-glycero-3-phosphate + CoA. The catalysed reaction is 1-eicosanoyl-sn-glycero-3-phosphate + (9Z)-octadecenoyl-CoA = 1-eicosanoyl-2-(9Z)-octadecenoyl-sn-glycero-3-phosphate + CoA. The enzyme catalyses 1-tetradecanoyl-sn-glycerol 3-phosphate + (9Z)-octadecenoyl-CoA = 1-tetradecanoyl-2-(9Z)-octadecenoyl-sn-glycero-3-phosphate + CoA. It catalyses the reaction 1-(9Z-octadecenoyl)-sn-glycero-3-phosphate + (5Z,8Z,11Z,14Z)-eicosatetraenoyl-CoA = 1-(9Z)-octadecenoyl-2-(5Z,8Z,11Z,14Z)-eicosatetraenoyl-sn-glycero-3-phosphate + CoA. It carries out the reaction 1-(9Z-octadecenoyl)-sn-glycero-3-phosphate + dodecanoyl-CoA = 1-(9Z)-octadecenoyl-2-dodecanoyl-sn-glycero-3-phosphate + CoA. The catalysed reaction is (6Z)-octadecenoyl-CoA + 1-(9Z-octadecenoyl)-sn-glycero-3-phosphate = 1-(9Z)-octadecenoyl-2-(6Z)-octadecenoyl-sn-glycero-3-phosphate + CoA. The enzyme catalyses (11Z)-octadecenoyl-CoA + 1-(9Z-octadecenoyl)-sn-glycero-3-phosphate = 1-(9Z)-octadecenoyl-2-(11Z)-octadecenoyl-sn-glycero-3-phosphate + CoA. It catalyses the reaction (9Z)-hexadecenoyl-CoA + 1-(9Z-octadecenoyl)-sn-glycero-3-phosphate = 1-(9Z-octadecenoyl)-2-(9Z-hexadecenoyl)-sn-glycero-3-phosphate + CoA. Its pathway is phospholipid metabolism; CDP-diacylglycerol biosynthesis; CDP-diacylglycerol from sn-glycerol 3-phosphate: step 2/3. In terms of biological role, converts 1-acyl-sn-glycerol-3-phosphate (lysophosphatidic acid or LPA) into 1,2-diacyl-sn-glycerol-3-phosphate (phosphatidic acid or PA) by incorporating an acyl moiety at the sn-2 position of the glycerol backbone. The polypeptide is 1-acyl-sn-glycerol-3-phosphate acyltransferase alpha (Agpat1) (Mus musculus (Mouse)).